A 240-amino-acid polypeptide reads, in one-letter code: RNA-binding protein pno1 (240 aa).

Residues Met1–Lys15 are compositionally biased toward basic and acidic residues. The disordered stretch occupies residues Met1–Ser61. One can recognise a KH domain in the interval Gln164–Val213.

The protein belongs to the PNO1 family.

It localises to the nucleus. The protein localises to the nucleolus. The protein is RNA-binding protein pno1 (l(1)G0004) of Drosophila melanogaster (Fruit fly).